We begin with the raw amino-acid sequence, 120 residues long: uncharacterized protein (120 aa).

This is an uncharacterized protein from Acanthamoeba polyphaga mimivirus (APMV).